Here is a 221-residue protein sequence, read N- to C-terminus: ATP-dependent Clp protease proteolytic subunit 1, mitochondrial (221 aa).

A mitochondrion-targeting transit peptide spans 1–25 (MLRRLVTSSLSASRSMSASVQSRVG). The Nucleophile role is filled by Ser120. Residue His145 is part of the active site.

The protein belongs to the peptidase S14 family. In terms of assembly, tetradecamer that assembles into a two heptameric rings with a central cavity. As to expression, expressed in the intestine.

The protein resides in the mitochondrion matrix. The catalysed reaction is Hydrolysis of proteins to small peptides in the presence of ATP and magnesium. alpha-casein is the usual test substrate. In the absence of ATP, only oligopeptides shorter than five residues are hydrolyzed (such as succinyl-Leu-Tyr-|-NHMec, and Leu-Tyr-Leu-|-Tyr-Trp, in which cleavage of the -Tyr-|-Leu- and -Tyr-|-Trp bonds also occurs).. In terms of biological role, clp cleaves peptides in various proteins in a process that requires ATP hydrolysis. Clp may be responsible for a fairly general and central housekeeping function rather than for the degradation of specific substrates. This is ATP-dependent Clp protease proteolytic subunit 1, mitochondrial (clpp-1) from Caenorhabditis elegans.